The sequence spans 1070 residues: DNA-directed RNA polymerase subunit beta (1070 aa).

The protein belongs to the RNA polymerase beta chain family. In terms of assembly, in plastids the minimal PEP RNA polymerase catalytic core is composed of four subunits: alpha, beta, beta', and beta''. When a (nuclear-encoded) sigma factor is associated with the core the holoenzyme is formed, which can initiate transcription.

It localises to the plastid. The protein localises to the chloroplast. It carries out the reaction RNA(n) + a ribonucleoside 5'-triphosphate = RNA(n+1) + diphosphate. DNA-dependent RNA polymerase catalyzes the transcription of DNA into RNA using the four ribonucleoside triphosphates as substrates. The protein is DNA-directed RNA polymerase subunit beta of Chaetosphaeridium globosum (Charophycean green alga).